The following is a 319-amino-acid chain: Serine/threonine-protein phosphatase PP1 isozyme 2 (319 aa).

Mn(2+) is bound by residues D61, H63, D89, and N121. The active-site Proton donor is H122. Positions 170 and 245 each coordinate Mn(2+).

This sequence belongs to the PPP phosphatase family. PP-1 subfamily. The cofactor is Mn(2+).

It carries out the reaction O-phospho-L-seryl-[protein] + H2O = L-seryl-[protein] + phosphate. The catalysed reaction is O-phospho-L-threonyl-[protein] + H2O = L-threonyl-[protein] + phosphate. The polypeptide is Serine/threonine-protein phosphatase PP1 isozyme 2 (Acetabularia peniculus (Green alga)).